The following is a 243-amino-acid chain: Adenosine 5'-phosphosulfate reductase (243 aa).

Residues Cys126, Cys127, Cys209, and Cys212 each coordinate [4Fe-4S] cluster. Residue Cys235 is the Nucleophile; cysteine thiosulfonate intermediate of the active site.

This sequence belongs to the PAPS reductase family. CysH subfamily. [4Fe-4S] cluster is required as a cofactor.

The protein localises to the cytoplasm. The enzyme catalyses [thioredoxin]-disulfide + sulfite + AMP + 2 H(+) = adenosine 5'-phosphosulfate + [thioredoxin]-dithiol. It functions in the pathway sulfur metabolism; hydrogen sulfide biosynthesis; sulfite from sulfate. In terms of biological role, catalyzes the formation of sulfite from adenosine 5'-phosphosulfate (APS) using thioredoxin as an electron donor. This is Adenosine 5'-phosphosulfate reductase from Staphylococcus epidermidis (strain ATCC 12228 / FDA PCI 1200).